The following is a 292-amino-acid chain: NAD kinase (292 aa).

Asp72 acts as the Proton acceptor in catalysis. Residues 72 to 73, 146 to 147, His157, Arg174, Asp176, and 187 to 192 each bind NAD(+); these read DG, NE, and TAYSLS.

This sequence belongs to the NAD kinase family. Requires a divalent metal cation as cofactor.

It is found in the cytoplasm. It carries out the reaction NAD(+) + ATP = ADP + NADP(+) + H(+). In terms of biological role, involved in the regulation of the intracellular balance of NAD and NADP, and is a key enzyme in the biosynthesis of NADP. Catalyzes specifically the phosphorylation on 2'-hydroxyl of the adenosine moiety of NAD to yield NADP. This chain is NAD kinase, found in Shewanella loihica (strain ATCC BAA-1088 / PV-4).